A 273-amino-acid chain; its full sequence is Urease accessory protein UreD (273 aa).

The protein belongs to the UreD family. In terms of assembly, ureD, UreF and UreG form a complex that acts as a GTP-hydrolysis-dependent molecular chaperone, activating the urease apoprotein by helping to assemble the nickel containing metallocenter of UreC. The UreE protein probably delivers the nickel.

It is found in the cytoplasm. In terms of biological role, required for maturation of urease via the functional incorporation of the urease nickel metallocenter. The sequence is that of Urease accessory protein UreD from Rhizobium rhizogenes (strain K84 / ATCC BAA-868) (Agrobacterium radiobacter).